The sequence spans 232 residues: dITP/XTP pyrophosphatase (232 aa).

Threonine 10–lysine 15 is a substrate binding site. Aspartate 72 acts as the Proton acceptor in catalysis. Aspartate 72 provides a ligand contact to Mg(2+). Substrate-binding positions include serine 73, phenylalanine 153–aspartate 156, lysine 176, and histidine 181–arginine 182.

The protein belongs to the HAM1 NTPase family. In terms of assembly, homodimer. Requires Mg(2+) as cofactor.

It catalyses the reaction XTP + H2O = XMP + diphosphate + H(+). It carries out the reaction dITP + H2O = dIMP + diphosphate + H(+). The catalysed reaction is ITP + H2O = IMP + diphosphate + H(+). Pyrophosphatase that catalyzes the hydrolysis of nucleoside triphosphates to their monophosphate derivatives, with a high preference for the non-canonical purine nucleotides XTP (xanthosine triphosphate), dITP (deoxyinosine triphosphate) and ITP. Seems to function as a house-cleaning enzyme that removes non-canonical purine nucleotides from the nucleotide pool, thus preventing their incorporation into DNA/RNA and avoiding chromosomal lesions. The protein is dITP/XTP pyrophosphatase of Syntrophobacter fumaroxidans (strain DSM 10017 / MPOB).